The following is a 198-amino-acid chain: Linker for activation of T-cells family member 2 (198 aa).

At 1-4 (MAQP) the chain is on the extracellular side. Residues 5-24 (ELLWAAAGLMLLGVAVSACV) form a helical; Signal-anchor for type III membrane protein membrane-spanning segment. 2 S-palmitoyl cysteine lipidation sites follow: C23 and C26. The Cytoplasmic portion of the chain corresponds to 25–198 (RCQLYATKRG…PTIDAVVLSK (174 aa)). Residues Y136, Y155, and Y184 each carry the phosphotyrosine modification.

As to quaternary structure, when phosphorylated, interacts with GRB2. In terms of processing, phosphorylated on tyrosines following cross-linking of BCR; which induces the recruitment of GRB2.

The protein localises to the cell membrane. Its function is as follows. Involved in BCR (B-cell antigen receptor)-mediated signaling in B-cells. May also be involved in FCER1 (high affinity immunoglobulin epsilon receptor)-mediated signaling in mast cells and FCGR1 (high affinity immunoglobulin gamma Fc receptor I)-mediated signaling in myeloid cells. Couples activation of these receptors and their associated kinases with distal intracellular events such as calcium mobilization through the recruitment of GRB2. In Gallus gallus (Chicken), this protein is Linker for activation of T-cells family member 2 (LAT2).